We begin with the raw amino-acid sequence, 263 residues long: Tryptophan synthase alpha chain (263 aa).

Catalysis depends on proton acceptor residues Glu-49 and Asp-60.

This sequence belongs to the TrpA family. As to quaternary structure, tetramer of two alpha and two beta chains.

It carries out the reaction (1S,2R)-1-C-(indol-3-yl)glycerol 3-phosphate + L-serine = D-glyceraldehyde 3-phosphate + L-tryptophan + H2O. It functions in the pathway amino-acid biosynthesis; L-tryptophan biosynthesis; L-tryptophan from chorismate: step 5/5. Functionally, the alpha subunit is responsible for the aldol cleavage of indoleglycerol phosphate to indole and glyceraldehyde 3-phosphate. This is Tryptophan synthase alpha chain from Roseobacter denitrificans (strain ATCC 33942 / OCh 114) (Erythrobacter sp. (strain OCh 114)).